We begin with the raw amino-acid sequence, 359 residues long: Histidinol-phosphate aminotransferase (359 aa).

Lys-212 carries the N6-(pyridoxal phosphate)lysine modification.

It belongs to the class-II pyridoxal-phosphate-dependent aminotransferase family. Histidinol-phosphate aminotransferase subfamily. Homodimer. The cofactor is pyridoxal 5'-phosphate.

The catalysed reaction is L-histidinol phosphate + 2-oxoglutarate = 3-(imidazol-4-yl)-2-oxopropyl phosphate + L-glutamate. The protein operates within amino-acid biosynthesis; L-histidine biosynthesis; L-histidine from 5-phospho-alpha-D-ribose 1-diphosphate: step 7/9. This chain is Histidinol-phosphate aminotransferase, found in Buchnera aphidicola subsp. Melaphis rhois.